Reading from the N-terminus, the 433-residue chain is Serine hydroxymethyltransferase (433 aa).

(6S)-5,6,7,8-tetrahydrofolate-binding positions include Leu-132 and 136 to 138 (GHL). Lys-241 is modified (N6-(pyridoxal phosphate)lysine).

The protein belongs to the SHMT family. Homodimer. Requires pyridoxal 5'-phosphate as cofactor.

It localises to the cytoplasm. The enzyme catalyses (6R)-5,10-methylene-5,6,7,8-tetrahydrofolate + glycine + H2O = (6S)-5,6,7,8-tetrahydrofolate + L-serine. Its pathway is one-carbon metabolism; tetrahydrofolate interconversion. It functions in the pathway amino-acid biosynthesis; glycine biosynthesis; glycine from L-serine: step 1/1. Catalyzes the reversible interconversion of serine and glycine with tetrahydrofolate (THF) serving as the one-carbon carrier. This reaction serves as the major source of one-carbon groups required for the biosynthesis of purines, thymidylate, methionine, and other important biomolecules. Also exhibits THF-independent aldolase activity toward beta-hydroxyamino acids, producing glycine and aldehydes, via a retro-aldol mechanism. The sequence is that of Serine hydroxymethyltransferase from Rhodopseudomonas palustris (strain HaA2).